Consider the following 1142-residue polypeptide: Protein kinase C-like (1142 aa).

The 67-residue stretch at Met-1–Gly-67 folds into the REM-1 1 domain. The interval Val-70–Arg-139 is disordered. The REM-1 2 domain maps to Lys-149–Asp-226. The region spanning Gly-231–Met-349 is the C2 domain. The tract at residues Ala-357 to Gln-403 is disordered. Positions Pro-385 to Ile-394 are enriched in polar residues. 2 consecutive Phorbol-ester/DAG-type zinc fingers follow at residues Gly-457–Cys-505 and Pro-525–Cys-576. Disordered stretches follow at residues Thr-592–Ile-622 and Ser-651–Gly-807. The span at Ser-613–Ile-622 shows a compositional bias: polar residues. Low complexity-rich tracts occupy residues Thr-663–Ala-677, Ser-712–Gln-724, and Pro-741–Gln-765. One can recognise a Protein kinase domain in the interval Phe-817–Phe-1076. ATP-binding positions include Leu-823 to Val-831 and Lys-846. Residue Asp-942 is the Proton acceptor of the active site. The 66-residue stretch at Arg-1077–Glu-1142 folds into the AGC-kinase C-terminal domain.

It belongs to the protein kinase superfamily. AGC Ser/Thr protein kinase family. PKC subfamily.

The enzyme catalyses L-seryl-[protein] + ATP = O-phospho-L-seryl-[protein] + ADP + H(+). It catalyses the reaction L-threonyl-[protein] + ATP = O-phospho-L-threonyl-[protein] + ADP + H(+). This chain is Protein kinase C-like, found in Neurospora crassa (strain ATCC 24698 / 74-OR23-1A / CBS 708.71 / DSM 1257 / FGSC 987).